The chain runs to 819 residues: LPS-assembly protein LptD (819 aa).

Residues 1–33 (MRQMKYQFKFNPLAAAIFTLLCGGSMQSSYADA) form the signal peptide.

The protein belongs to the LptD family. As to quaternary structure, component of the lipopolysaccharide transport and assembly complex. Interacts with LptE and LptA.

The protein localises to the cell outer membrane. Functionally, together with LptE, is involved in the assembly of lipopolysaccharide (LPS) at the surface of the outer membrane. In Acinetobacter baylyi (strain ATCC 33305 / BD413 / ADP1), this protein is LPS-assembly protein LptD.